Consider the following 429-residue polypeptide: Glycine betaine monooxygenase oxygenase subunit (429 aa).

The 108-residue stretch at 56 to 163 folds into the Rieske domain; the sequence is WLIAGMTCEI…VKTAGGYIFI (108 aa). Positions 98, 100, 118, and 121 each coordinate [2Fe-2S] cluster. H217 and H222 together coordinate Fe cation.

The protein belongs to the bacterial ring-hydroxylating dioxygenase alpha subunit family. As to quaternary structure, the system is composed of an oxygenase subunit (GbcA) and a reductase subunit (GbcB). [2Fe-2S] cluster serves as cofactor. The cofactor is Fe cation.

The enzyme catalyses glycine betaine + NADH + O2 + H(+) = N,N-dimethylglycine + formaldehyde + NAD(+) + H2O. Functionally, involved in degradation of glycine betaine. Part of a Rieske-type oxygenase system that catalyzes the conversion of glycine betaine (GB) to dimethylglycine (DMG). This subunit is the terminal oxygenase component of the system. The protein is Glycine betaine monooxygenase oxygenase subunit of Pseudomonas aeruginosa (strain UCBPP-PA14).